Reading from the N-terminus, the 323-residue chain is Acetyl esterase (323 aa).

The Involved in the stabilization of the negatively charged intermediate by the formation of the oxyanion hole signature appears at 91 to 93; it reads HGG. Active-site residues include S165, D262, and H292.

The protein belongs to the 'GDXG' lipolytic enzyme family. Homodimer. Interacts with MalT and MelA.

The protein resides in the cytoplasm. In terms of biological role, displays esterase activity towards short chain fatty esters (acyl chain length of up to 8 carbons). Able to hydrolyze triacetylglycerol (triacetin) and tributyrylglycerol (tributyrin), but not trioleylglycerol (triolein) or cholesterol oleate. Negatively regulates MalT activity by antagonizing maltotriose binding. Inhibits MelA galactosidase activity. The chain is Acetyl esterase from Salmonella schwarzengrund (strain CVM19633).